The sequence spans 248 residues: MATEAKYNRILIKLSGEALAGEGEFGIDTNKAHSLAEEIKEVHDLGVEIALVVGGGNIIRGTNLAKAGIDRATADYMGMLATIQNALALQDACEKKGLYTRVQSAIEINSIAESYIRRRAVRHLEKRRIVIFAGGTGNPYFTTDTTASLRAVEVGCDVILKATKVDGVYTADPKKDNGAKRYSQISFMESINRRLKVMDSTALSLCMENNMSIIVFDIFKRGNLKDLVTGKNIGTLISNSEDIQIDGK.

Position 13 to 16 (13 to 16) interacts with ATP; sequence KLSG. A UMP-binding site is contributed by glycine 55. Positions 56 and 60 each coordinate ATP. Residues aspartate 75 and 136-143 each bind UMP; that span reads TGNPYFTT. Residues threonine 163, tyrosine 169, and aspartate 172 each coordinate ATP.

It belongs to the UMP kinase family. Homohexamer.

The protein resides in the cytoplasm. The enzyme catalyses UMP + ATP = UDP + ADP. It functions in the pathway pyrimidine metabolism; CTP biosynthesis via de novo pathway; UDP from UMP (UMPK route): step 1/1. Inhibited by UTP. Catalyzes the reversible phosphorylation of UMP to UDP. This chain is Uridylate kinase, found in Leptospira interrogans serogroup Icterohaemorrhagiae serovar copenhageni (strain Fiocruz L1-130).